A 310-amino-acid polypeptide reads, in one-letter code: Protein TIFY 6A (310 aa).

Residues 141–176 (SKPLPPQLTIFYAGSVLVYQDIAPEKAQAIMLLAGN) form the Tify domain. A Jas motif is present at residues 259 to 284 (PQTRKASLARFLEKRKERVINVSPYY). Positions 261–268 (TRKASLAR) match the Nuclear localization signal motif.

This sequence belongs to the TIFY/JAZ family. In terms of assembly, homo- and heterodimer. Interacts with MYC2, AFPH2/NINJA, TIFY10A/JAZ1, TIFY6B/JAZ3, TIFY5A/JAZ8, TIFY9/JAZ10 and TIFY3A/JAZ11. Interacts with RHD6 and RSL1. In terms of processing, ubiquitinated. Targeted for degradation by the SCF(COI1) E3 ubiquitin ligase-proteasome pathway during jasmonate signaling.

The protein resides in the nucleus. Functionally, repressor of jasmonate responses. Interacts with and suppresses RHD6 and RSL1 transcription factor activities to negatively regulate jasmonate-stimulated root hair development. In Arabidopsis thaliana (Mouse-ear cress), this protein is Protein TIFY 6A (TIFY6A).